Here is a 98-residue protein sequence, read N- to C-terminus: Small ribosomal subunit protein bS20 (98 aa).

Residues 1–12 (MAPRKPSKKVGP) are compositionally biased toward basic residues. The disordered stretch occupies residues 1–34 (MAPRKPSKKVGPQKRPSAEKRVITSKKKQLRNQS).

This sequence belongs to the bacterial ribosomal protein bS20 family.

Its function is as follows. Binds directly to 16S ribosomal RNA. This Chlamydia muridarum (strain MoPn / Nigg) protein is Small ribosomal subunit protein bS20.